The following is a 62-amino-acid chain: Photosystem II reaction center protein Z (62 aa).

The next 2 membrane-spanning stretches (helical) occupy residues 8–28 and 41–61; these read ALFALVAISFILVVGVPVILA and FSGASLWIFLVFVVGILNSFI.

The protein belongs to the PsbZ family. In terms of assembly, PSII is composed of 1 copy each of membrane proteins PsbA, PsbB, PsbC, PsbD, PsbE, PsbF, PsbH, PsbI, PsbJ, PsbK, PsbL, PsbM, PsbT, PsbY, PsbZ, Psb30/Ycf12, at least 3 peripheral proteins of the oxygen-evolving complex and a large number of cofactors. It forms dimeric complexes.

The protein resides in the plastid. It is found in the chloroplast thylakoid membrane. Functionally, may control the interaction of photosystem II (PSII) cores with the light-harvesting antenna, regulates electron flow through the 2 photosystem reaction centers. PSII is a light-driven water plastoquinone oxidoreductase, using light energy to abstract electrons from H(2)O, generating a proton gradient subsequently used for ATP formation. This chain is Photosystem II reaction center protein Z, found in Chara vulgaris (Common stonewort).